The sequence spans 507 residues: ATP synthase subunit alpha, chloroplastic (507 aa).

170 to 177 (GDRQTGKT) serves as a coordination point for ATP.

The protein belongs to the ATPase alpha/beta chains family. F-type ATPases have 2 components, CF(1) - the catalytic core - and CF(0) - the membrane proton channel. CF(1) has five subunits: alpha(3), beta(3), gamma(1), delta(1), epsilon(1). CF(0) has four main subunits: a, b, b' and c.

Its subcellular location is the plastid. It is found in the chloroplast thylakoid membrane. The enzyme catalyses ATP + H2O + 4 H(+)(in) = ADP + phosphate + 5 H(+)(out). Functionally, produces ATP from ADP in the presence of a proton gradient across the membrane. The alpha chain is a regulatory subunit. In Manihot esculenta (Cassava), this protein is ATP synthase subunit alpha, chloroplastic.